A 277-amino-acid polypeptide reads, in one-letter code: Caspase-3 (277 aa).

Met1 bears the N-acetylmethionine mark. 2 consecutive propeptides follow at residues 1–9 (MDNNETSVD) and 10–28 (SKSINNFETKTIHGSKSMD). Lys11 bears the N6-acetyllysine mark. Phosphoserine is present on Ser26. Catalysis depends on residues His121 and Cys163. Cys163 carries the S-nitrosocysteine; in inhibited form modification.

The protein belongs to the peptidase C14A family. In terms of assembly, heterotetramer that consists of two anti-parallel arranged heterodimers, each one formed by a 17 kDa (p17) and a 12 kDa (p12) subunit. Interacts with BIRC6/bruce. Post-translationally, cleavage by granzyme B, caspase-6, caspase-8 and caspase-10 generates the two active subunits. Additional processing of the propeptides is likely due to the autocatalytic activity of the activated protease. Active heterodimers between the small subunit of caspase-7 protease and the large subunit of caspase-3 also occur and vice versa. S-nitrosylated on its catalytic site cysteine in unstimulated cell lines and denitrosylated upon activation of the Fas apoptotic pathway, associated with an increase in intracellular caspase activity. Fas therefore activates caspase-3 not only by inducing the cleavage of the caspase zymogen to its active subunits, but also by stimulating the denitrosylation of its active site thiol. In terms of processing, ubiquitinated by BIRC6; this activity is inhibited by DIABLO/SMAC. Expressed in heart, brain, liver, and muscle but not in kidney or testis.

Its subcellular location is the cytoplasm. The enzyme catalyses Strict requirement for an Asp residue at positions P1 and P4. It has a preferred cleavage sequence of Asp-Xaa-Xaa-Asp-|- with a hydrophobic amino-acid residue at P2 and a hydrophilic amino-acid residue at P3, although Val or Ala are also accepted at this position.. Inhibited by BIRC6; following inhibition of BIRC6-caspase binding by DIABLO/SMAC, BIRC6 is subjected to caspase cleavage, leading to an increase in active caspases. Involved in the activation cascade of caspases responsible for apoptosis execution. At the onset of apoptosis, it proteolytically cleaves poly(ADP-ribose) polymerase PARP1 at a '216-Asp-|-Gly-217' bond. Cleaves and activates sterol regulatory element binding proteins (SREBPs) between the basic helix-loop-helix leucine zipper domain and the membrane attachment domain. Cleaves and activates caspase-6, -7 and -9 (CASP6, CASP7 and CASP9, respectively). Cleaves and inactivates interleukin-18 (IL18). Triggers cell adhesion in sympathetic neurons through RET cleavage. Cleaves IL-1 beta between an Asp and an Ala, releasing the mature cytokine which is involved in a variety of inflammatory processes. Cleaves and inhibits serine/threonine-protein kinase AKT1 in response to oxidative stress. Acts as an inhibitor of type I interferon production during virus-induced apoptosis by mediating cleavage of antiviral proteins CGAS, IRF3 and MAVS, thereby preventing cytokine overproduction. Also involved in pyroptosis by mediating cleavage and activation of gasdermin-E (GSDME). Cleaves XRCC4 and phospholipid scramblase proteins XKR4, XKR8 and XKR9, leading to promote phosphatidylserine exposure on apoptotic cell surface. Cleaves BIRC6 following inhibition of BIRC6-caspase binding by DIABLO/SMAC. The protein is Caspase-3 (Casp3) of Rattus norvegicus (Rat).